We begin with the raw amino-acid sequence, 363 residues long: UDP-3-O-acylglucosamine N-acyltransferase (363 aa).

Residue His-266 is the Proton acceptor of the active site.

The protein belongs to the transferase hexapeptide repeat family. LpxD subfamily. In terms of assembly, homotrimer.

It carries out the reaction a UDP-3-O-[(3R)-3-hydroxyacyl]-alpha-D-glucosamine + a (3R)-hydroxyacyl-[ACP] = a UDP-2-N,3-O-bis[(3R)-3-hydroxyacyl]-alpha-D-glucosamine + holo-[ACP] + H(+). It functions in the pathway bacterial outer membrane biogenesis; LPS lipid A biosynthesis. Functionally, catalyzes the N-acylation of UDP-3-O-acylglucosamine using 3-hydroxyacyl-ACP as the acyl donor. Is involved in the biosynthesis of lipid A, a phosphorylated glycolipid that anchors the lipopolysaccharide to the outer membrane of the cell. The sequence is that of UDP-3-O-acylglucosamine N-acyltransferase from Bordetella bronchiseptica (strain ATCC BAA-588 / NCTC 13252 / RB50) (Alcaligenes bronchisepticus).